The sequence spans 365 residues: Aspartate-semialdehyde dehydrogenase (365 aa).

Residues T15, G16, T17, V18, S40, S43, L89, and D90 each coordinate NADP(+). C156 serves as the catalytic Acyl-thioester intermediate. Residue G188 participates in NADP(+) binding. H255 (proton acceptor) is an active-site residue. Position 342 (N342) interacts with NADP(+).

This sequence belongs to the aspartate-semialdehyde dehydrogenase family. Homotetramer; dimer of dimers.

It is found in the cytoplasm. The protein localises to the cytosol. Its subcellular location is the nucleus. It catalyses the reaction L-aspartate 4-semialdehyde + phosphate + NADP(+) = 4-phospho-L-aspartate + NADPH + H(+). The protein operates within amino-acid biosynthesis; L-methionine biosynthesis via de novo pathway; L-homoserine from L-aspartate: step 2/3. Its pathway is amino-acid biosynthesis; L-threonine biosynthesis; L-threonine from L-aspartate: step 2/5. Its activity is regulated as follows. Inhibited by the competitive inhibitor 1,4-benzoquinone and derivates such as 2-chloro-3-methoxy-1,4-naphthoquinone, 2,3-dichloro-1,4-naphthoquinone, 2-chloro-1,4-naphthoquinone, 2-bromo-1,4-naphthoquinone and 2,3-dichloro-5,8-dihydroxy-1,4-naphthoquinone. Functionally, catalyzes the NADPH-dependent formation of L-aspartate 4-semialdehyde (L-ASA) by the reductive dephosphorylation of 4-phospho-L-aspartate. Mediates the second step in the biosynthesis of amino acids that derive from aspartate (the aspartate family of amino acids), including methioinine and threonine, the latter of which is a precursor to isoleucine. The chain is Aspartate-semialdehyde dehydrogenase from Cryptococcus neoformans var. neoformans serotype D (strain JEC21 / ATCC MYA-565) (Filobasidiella neoformans).